The sequence spans 2122 residues: Pecanex-like protein 2 (2122 aa).

The next 2 membrane-spanning stretches (helical) occupy residues 36-53 (LYLW…HLAF) and 60-82 (ALFY…YRLH). 2 disordered regions span residues 92–164 (QHRS…ELPA) and 180–250 (QPEA…LVNP). Polar residues-rich tracts occupy residues 146–157 (SRGQSVHSQHSS) and 185–203 (ASST…SQGR). N-linked (GlcNAc...) asparagine glycosylation occurs at N288. Composition is skewed to low complexity over residues 392-407 (VTSS…AESA) and 458-476 (PDRC…PGST). Disordered stretches follow at residues 392 to 556 (VTSS…QIPN) and 575 to 634 (VVAP…PVFT). Over residues 528–538 (STKEVVSDGEK) the composition is skewed to basic and acidic residues. N556 is a glycosylation site (N-linked (GlcNAc...) asparagine). Residues 599 to 618 (TKEEAVENEKPNGRDPKPGK) show a composition bias toward basic and acidic residues. Residues 625–634 (DPANGSPVFT) are compositionally biased toward polar residues. The next 13 helical transmembrane spans lie at 825–845 (VAVL…NRGF), 849–869 (LWVL…LKSV), 882–902 (QIIA…ILLL), 933–953 (HLIV…FPQI), 976–998 (GITS…HAFC), 1010–1030 (HIPA…YHLS), 1080–1100 (LVIC…TVFL), 1105–1125 (FLSI…HHLL), 1174–1194 (YLLY…SISN), 1218–1238 (SFCN…FFHF), 1245–1265 (ESFL…GDLL), 1270–1290 (FVLA…HVFA), and 1305–1325 (TFAT…VIFI). Residues N1393, N1534, and N1802 are each glycosylated (N-linked (GlcNAc...) asparagine). Disordered stretches follow at residues 1858–1943 (SVGQ…SSGP) and 1955–1991 (STSV…TTGH). The segment covering 1888-1898 (ESRDGSTEQPR) has biased composition (basic and acidic residues). Residues 1922 to 1942 (SQSVQAHSAISQRPPTLSSSG) show a composition bias toward polar residues. Residues 1968–1981 (SRLSLHTSAASLHS) are compositionally biased toward low complexity. An N-linked (GlcNAc...) asparagine glycan is attached at N2039. Residues 2097 to 2122 (VLCRRASQEDMGLDDTASQQSTSDEQ) are disordered. Over residues 2112 to 2122 (TASQQSTSDEQ) the composition is skewed to polar residues.

This sequence belongs to the pecanex family.

It localises to the membrane. Functionally, may play a role in tumorigenesis. This Mus musculus (Mouse) protein is Pecanex-like protein 2.